Consider the following 67-residue polypeptide: Prokaryotic ubiquitin-like protein Pup (67 aa).

Residues methionine 1–alanine 36 are disordered. The segment at threonine 23–phenylalanine 61 is ARC ATPase binding. An Isoglutamyl lysine isopeptide (Glu-Lys) (interchain with K-? in acceptor proteins) cross-link involves residue glutamate 67.

This sequence belongs to the prokaryotic ubiquitin-like protein family. Strongly interacts with the proteasome-associated ATPase ARC through a hydrophobic interface; the interacting region of Pup lies in its C-terminal half. There is one Pup binding site per ARC hexamer ring.

It functions in the pathway protein degradation; proteasomal Pup-dependent pathway. Protein modifier that is covalently attached to lysine residues of substrate proteins, thereby targeting them for proteasomal degradation. The tagging system is termed pupylation. The protein is Prokaryotic ubiquitin-like protein Pup of Bifidobacterium longum (strain DJO10A).